The chain runs to 140 residues: RNA silencing suppressor (140 aa).

The interval Arg-73–Arg-76 is basic. 2 consecutive C4-type zinc fingers follow at residues Cys-83 to Cys-98 and Cys-83 to Cys-103.

It belongs to the carlaviruses nucleic acid-binding protein family.

Its function is as follows. Suppressor of viral-induced RNA silencing. The potential mechanism of action is based on sequestering siRNAs. In Lily symptomless virus (LSV), this protein is RNA silencing suppressor.